The chain runs to 64 residues: Conotoxin Cal12.4 (64 aa).

The signal sequence occupies residues 1-21; sequence MKLTCMLVVLLLVLPFGDLIA.

Belongs to the conotoxin O1 superfamily. Contains 4 disulfide bonds. As to expression, expressed by the venom duct.

The protein localises to the secreted. Functionally, probable neurotoxin. The protein is Conotoxin Cal12.4 of Californiconus californicus (California cone).